The primary structure comprises 313 residues: Probable inactive peptidyl-prolyl cis-trans isomerase-like 6 (313 aa).

A PPIase cyclophilin-type domain is found at 147–310; that stretch reads YLDICIDLSP…LLCSIADSGV (164 aa).

It belongs to the cyclophilin-type PPIase family.

Its function is as follows. Probable inactive PPIase with no peptidyl-prolyl cis-trans isomerase activity. In Mus musculus (Mouse), this protein is Probable inactive peptidyl-prolyl cis-trans isomerase-like 6.